Reading from the N-terminus, the 879-residue chain is Oxysterol-binding protein-related protein 5 (879 aa).

The interval 1 to 73 is disordered; it reads MKEEAFLRRR…TPSSATKVPP (73 aa). S12 carries the post-translational modification Phosphoserine. Residues 93-123 are a coiled coil; the sequence is VTKKETLKAQKENYRQEKKRATRQLLSALTD. A PH domain is found at 126 to 243; it reads VVIMADSLKI…WLDALELALR (118 aa). The tract at residues 254–341 is disordered; sequence KPGRDGEPGT…TPGAPVRRGT (88 aa). 2 stretches are compositionally biased toward basic and acidic residues: residues 300–309 and 316–325; these read FSDKSERENP and TQDHSRKTES. A 1,2-diacyl-sn-glycero-3-phospho-(1D-myo-inositol 4-phosphate)-binding positions include 384–389, 446–449, and 478–479; these read LSRVVL, KPYN, and HH. Residues 384–389 and N449 contribute to the a 1,2-diacyl-sn-glycero-3-phospho-L-serine site; that span reads LSRVVL. S504 serves as a coordination point for a 1,2-diacyl-sn-glycero-3-phospho-L-serine. 3 residues coordinate a 1,2-diacyl-sn-glycero-3-phospho-(1D-myo-inositol 4-phosphate): K670, E674, and R678. The segment at 742–806 is disordered; it reads TTFLGSPGPR…FVPGGESPCP (65 aa). Position 747 is a phosphoserine (S747). A compositionally biased stretch (basic and acidic residues) spans 750–765; the sequence is PRHERSGPDQRLRKAS. Over residues 766–783 the composition is skewed to polar residues; the sequence is DQPSGHSQATESSGSTPE. Residues 860–878 traverse the membrane as a helical segment; it reads SWFLLCVFLACQLFINHIL.

It belongs to the OSBP family. As to expression, ubiquitously expressed.

It localises to the endoplasmic reticulum membrane. In terms of biological role, lipid transporter involved in lipid countertransport between the endoplasmic reticulum and the plasma membrane: specifically exchanges phosphatidylserine with phosphatidylinositol 4-phosphate (PI4P), delivering phosphatidylserine to the plasma membrane in exchange for PI4P, which is degraded by the SAC1/SACM1L phosphatase in the endoplasmic reticulum. Binds phosphatidylserine and PI4P in a mutually exclusive manner. May cooperate with NPC1 to mediate the exit of cholesterol from endosomes/lysosomes. Binds 25-hydroxycholesterol and cholesterol. In Homo sapiens (Human), this protein is Oxysterol-binding protein-related protein 5 (OSBPL5).